Consider the following 123-residue polypeptide: Ribosome-binding factor A (123 aa).

Belongs to the RbfA family. In terms of assembly, monomer. Binds 30S ribosomal subunits, but not 50S ribosomal subunits or 70S ribosomes.

It localises to the cytoplasm. Its function is as follows. One of several proteins that assist in the late maturation steps of the functional core of the 30S ribosomal subunit. Associates with free 30S ribosomal subunits (but not with 30S subunits that are part of 70S ribosomes or polysomes). Required for efficient processing of 16S rRNA. May interact with the 5'-terminal helix region of 16S rRNA. The polypeptide is Ribosome-binding factor A (Rickettsia bellii (strain OSU 85-389)).